The following is a 225-amino-acid chain: PKHD-type hydroxylase YbiX (225 aa).

The 100-residue stretch at 78–177 (TLSTPLFNRY…RVASFMWIQS (100 aa)) folds into the Fe2OG dioxygenase domain. Residues histidine 96, aspartate 98, and histidine 158 each coordinate Fe cation. A 2-oxoglutarate-binding site is contributed by arginine 168.

Fe(2+) is required as a cofactor. Requires L-ascorbate as cofactor.

The chain is PKHD-type hydroxylase YbiX from Shigella flexneri serotype 5b (strain 8401).